The chain runs to 43 residues: Structural protein ORF5a (43 aa).

A helical transmembrane segment spans residues 2 to 22 (FSQIGAFLDSALLLLVAFFAV).

Belongs to the arteriviridae ORF5a protein family. Interacts with proteins GP2B and GP4.

The protein localises to the virion. Its subcellular location is the host cell membrane. Functionally, minor virion component that plays an essential role in virus infectivity. The polypeptide is Structural protein ORF5a (Sus scrofa (Pig)).